Here is a 298-residue protein sequence, read N- to C-terminus: Bifunctional protein FolD (298 aa).

NADP(+) is bound by residues 166-168, Ser-195, and Ile-236; that span reads GRS.

The protein belongs to the tetrahydrofolate dehydrogenase/cyclohydrolase family. Homodimer.

It carries out the reaction (6R)-5,10-methylene-5,6,7,8-tetrahydrofolate + NADP(+) = (6R)-5,10-methenyltetrahydrofolate + NADPH. It catalyses the reaction (6R)-5,10-methenyltetrahydrofolate + H2O = (6R)-10-formyltetrahydrofolate + H(+). Its pathway is one-carbon metabolism; tetrahydrofolate interconversion. In terms of biological role, catalyzes the oxidation of 5,10-methylenetetrahydrofolate to 5,10-methenyltetrahydrofolate and then the hydrolysis of 5,10-methenyltetrahydrofolate to 10-formyltetrahydrofolate. In Chlorobium phaeobacteroides (strain BS1), this protein is Bifunctional protein FolD.